Here is a 458-residue protein sequence, read N- to C-terminus: Zinc finger protein 239 (458 aa).

K108 is covalently cross-linked (Glycyl lysine isopeptide (Lys-Gly) (interchain with G-Cter in SUMO2)). S191 bears the Phosphoserine mark. 9 C2H2-type zinc fingers span residues 207–229 (YECS…QRDH), 235–257 (YKCE…QAVH), 263–285 (YKCD…HAVH), 291–313 (YKCD…QRVH), 319–341 (YECE…QRVH), 347–369 (YKCG…RCIH), 375–397 (YQCY…LRVH), 403–425 (YHCG…QRVH), and 431–453 (YECS…QRVH).

This sequence belongs to the krueppel C2H2-type zinc-finger protein family.

The protein localises to the nucleus. Functionally, may be involved in transcriptional regulation. The polypeptide is Zinc finger protein 239 (ZNF239) (Pongo abelii (Sumatran orangutan)).